The primary structure comprises 477 residues: Glycogen synthase (477 aa).

K15 provides a ligand contact to ADP-alpha-D-glucose.

The protein belongs to the glycosyltransferase 1 family. Bacterial/plant glycogen synthase subfamily.

The enzyme catalyses [(1-&gt;4)-alpha-D-glucosyl](n) + ADP-alpha-D-glucose = [(1-&gt;4)-alpha-D-glucosyl](n+1) + ADP + H(+). It functions in the pathway glycan biosynthesis; glycogen biosynthesis. In terms of biological role, synthesizes alpha-1,4-glucan chains using ADP-glucose. This Streptococcus pneumoniae (strain JJA) protein is Glycogen synthase.